The chain runs to 311 residues: tRNA dimethylallyltransferase (311 aa).

11–18 contributes to the ATP binding site; the sequence is GPTAVGKT. Residue 13–18 coordinates substrate; it reads TAVGKT. The interaction with substrate tRNA stretch occupies residues 36 to 39; it reads DSVQ.

It belongs to the IPP transferase family. Monomer. Requires Mg(2+) as cofactor.

It carries out the reaction adenosine(37) in tRNA + dimethylallyl diphosphate = N(6)-dimethylallyladenosine(37) in tRNA + diphosphate. Catalyzes the transfer of a dimethylallyl group onto the adenine at position 37 in tRNAs that read codons beginning with uridine, leading to the formation of N6-(dimethylallyl)adenosine (i(6)A). The polypeptide is tRNA dimethylallyltransferase (Exiguobacterium sp. (strain ATCC BAA-1283 / AT1b)).